Consider the following 161-residue polypeptide: Nucleotide-binding protein BamMC406_2474 (161 aa).

Belongs to the YajQ family.

Its function is as follows. Nucleotide-binding protein. The protein is Nucleotide-binding protein BamMC406_2474 of Burkholderia ambifaria (strain MC40-6).